Consider the following 255-residue polypeptide: Small ribosomal subunit protein uS2 (255 aa).

This sequence belongs to the universal ribosomal protein uS2 family.

The sequence is that of Small ribosomal subunit protein uS2 from Streptococcus thermophilus (strain ATCC BAA-491 / LMD-9).